Reading from the N-terminus, the 478-residue chain is Zinc metalloproteinase/disintegrin (478 aa).

An N-terminal signal peptide occupies residues 1 to 20 (MIQVLLVTICLAAFPYQGSS). Positions 21–187 (IILESGNVND…PIKKASHLNL (167 aa)) are excised as a propeptide. Residues 193–389 (RYVEIVIVVD…QKPQCILKKP (197 aa)) enclose the Peptidase M12B domain. 3 disulfide bridges follow: cysteine 304/cysteine 384, cysteine 344/cysteine 368, and cysteine 346/cysteine 351. Histidine 329 provides a ligand contact to Zn(2+). Glutamate 330 is a catalytic residue. Histidine 333 and histidine 339 together coordinate Zn(2+). Residues 390-408 (LRTDTVSTPVSGNELLEAR) constitute a propeptide that is removed on maturation. The 82-residue stretch at 397–478 (TPVSGNELLE…ADCPRNVLYG (82 aa)) folds into the Disintegrin domain. Intrachain disulfides connect cysteine 411-cysteine 420, cysteine 413-cysteine 421, cysteine 426-cysteine 440, cysteine 434-cysteine 464, cysteine 439-cysteine 443, and cysteine 452-cysteine 471. A propeptide spanning residues 474 to 478 (NVLYG) is cleaved from the precursor.

The protein belongs to the venom metalloproteinase (M12B) family. P-II subfamily. P-IIa sub-subfamily. The cofactor is Zn(2+). Expressed by the venom gland.

Its subcellular location is the secreted. Snake venom zinc metalloproteinase that causes hemorrhage by provoking the degradation of the sub-endothelial matrix proteins (fibronectin, laminin, type IV collagen, nidogen, and gelatins). In terms of biological role, displays low cytotoxicity. In vitro, inhibits cancer cell migration (human breast cancer cell line MDA-MB-231) with a significant rate after 24 hours of incubation. The protein is Zinc metalloproteinase/disintegrin (MPII) of Crotalus durissus collilineatus (Brazilian rattlesnake).